A 290-amino-acid polypeptide reads, in one-letter code: tRNA (adenine(58)-N(1))-methyltransferase catalytic subunit TRMT61A (290 aa).

An N-acetylserine modification is found at serine 2. 5 substrate regions span residues 20–22 (LGH), 35–42 (QTQTRHGV), 64–65 (GW), 85–89 (QILYS), and 110–117 (SGTGSGSV). S-adenosyl-L-methionine is bound by residues leucine 87, 114–116 (SGS), glutamate 135, arginine 140, 163–164 (DV), and aspartate 181. 2 substrate regions span residues 180–183 (LDIP) and 205–212 (SFSPCIEQ). Position 264 is a phosphoserine (serine 264). Residue threonine 279 participates in substrate binding.

This sequence belongs to the class I-like SAM-binding methyltransferase superfamily. TRM61 family. Heterotetramer; composed of two copies of TRMT6 and two copies of TRMT61A.

The protein resides in the nucleus. It catalyses the reaction adenosine(58) in tRNA + S-adenosyl-L-methionine = N(1)-methyladenosine(58) in tRNA + S-adenosyl-L-homocysteine + H(+). The enzyme catalyses an adenosine in mRNA + S-adenosyl-L-methionine = an N(1)-methyladenosine in mRNA + S-adenosyl-L-homocysteine + H(+). Catalytic subunit of tRNA (adenine-N(1)-)-methyltransferase, which catalyzes the formation of N(1)-methyladenine at position 58 (m1A58) in initiator methionyl-tRNA. Catalytic subunit of mRNA N(1)-methyltransferase complex, which mediates methylation of adenosine residues at the N(1) position of a small subset of mRNAs: N(1) methylation takes place in tRNA T-loop-like structures of mRNAs and is only present at low stoichiometries. The chain is tRNA (adenine(58)-N(1))-methyltransferase catalytic subunit TRMT61A (Trmt61a) from Mus musculus (Mouse).